Reading from the N-terminus, the 387-residue chain is 3-ketoacyl-CoA thiolase (387 aa).

Catalysis depends on Cys91, which acts as the Acyl-thioester intermediate. Residues His343 and Cys373 each act as proton acceptor in the active site.

The protein belongs to the thiolase-like superfamily. Thiolase family. Heterotetramer of two alpha chains (FadB) and two beta chains (FadA).

The protein resides in the cytoplasm. It catalyses the reaction an acyl-CoA + acetyl-CoA = a 3-oxoacyl-CoA + CoA. Its pathway is lipid metabolism; fatty acid beta-oxidation. Functionally, catalyzes the final step of fatty acid oxidation in which acetyl-CoA is released and the CoA ester of a fatty acid two carbons shorter is formed. The polypeptide is 3-ketoacyl-CoA thiolase (Shewanella sp. (strain ANA-3)).